A 93-amino-acid chain; its full sequence is Co-chaperonin GroES 2 (93 aa).

The segment at 1 to 20 is disordered; the sequence is MQPLGERIVVQREESETTTA.

This sequence belongs to the GroES chaperonin family. In terms of assembly, heptamer of 7 subunits arranged in a ring. Interacts with the chaperonin GroEL.

Its subcellular location is the cytoplasm. Functionally, together with the chaperonin GroEL, plays an essential role in assisting protein folding. The GroEL-GroES system forms a nano-cage that allows encapsulation of the non-native substrate proteins and provides a physical environment optimized to promote and accelerate protein folding. GroES binds to the apical surface of the GroEL ring, thereby capping the opening of the GroEL channel. The sequence is that of Co-chaperonin GroES 2 from Rhodopirellula baltica (strain DSM 10527 / NCIMB 13988 / SH1).